The chain runs to 358 residues: C-X-C chemokine receptor type 4-A (358 aa).

The tract at residues 1-25 (MDGFSGGIDINIFDGNSTENGSGDF) is important for chemokine binding and signaling. Topologically, residues 1–44 (MDGFSGGIDINIFDGNSTENGSGDFEDFIEPCFMHENSDFNRIF) are extracellular. 2 N-linked (GlcNAc...) asparagine glycosylation sites follow: N16 and N20. Disulfide bonds link C32–C281 and C113–C190. The chain crosses the membrane as a helical span at residues 45-67 (LPTIYSFIFLLGIIGNGLVVVVM). Over 68–81 (GYQKKSRTMTDKYR) the chain is Cytoplasmic. The chain crosses the membrane as a helical span at residues 82–103 (LHLSVADLLFVFTLPFWSVDAA). The chemokine binding stretch occupies residues 98–101 (WSVD). Residues 104–114 (IGWYFKEFLCK) are Extracellular-facing. Residues 115–134 (AVHVIYTVNLYSSVLILAFI) traverse the membrane as a helical segment. Residues 117–121 (HVIYT) form a chemokine binding region. Topologically, residues 135–158 (SLDRYLAIVHATNSQGSRKMLADK) are cytoplasmic. The interval 139–151 (YLAIVHATNSQGS) is involved in dimerization; when bound to chemokine. Residues 159-178 (VVYAGVWLPALLLTVPDLVF) traverse the membrane as a helical segment. Residues 179 to 202 (ARVSDENGQFVCDRIYPIENRETW) lie on the Extracellular side of the membrane. The interval 190-194 (CDRIY) is chemokine binding, important for signaling. The chain crosses the membrane as a helical span at residues 203–223 (TVGFRFLHITVGLILPGLIIL). The Cytoplasmic segment spans residues 224-248 (ICYCVIISKLSHSKGHQKRKALKTT). A helical transmembrane segment spans residues 249–268 (VILILAFFACWLPYYVCLTT). Residues 269-289 (DTFMLLGLVKGDCIWENTLHM) are Extracellular-facing. A helical transmembrane segment spans residues 290 to 309 (AISITEALAFFHCCLNPILY). Over 310-358 (AFLGAKFKTSAQNAFTSVSRGSSLKILSKKRAGLSSVSTESESSSFHSS) the chain is Cytoplasmic. The tract at residues 338–358 (KKRAGLSSVSTESESSSFHSS) is disordered. The segment covering 344–358 (SSVSTESESSSFHSS) has biased composition (low complexity).

This sequence belongs to the G-protein coupled receptor 1 family. Monomer. Can form dimers. Post-translationally, sulfation is required for efficient binding of cxcl12/sdf-1alpha and promotes its dimerization. In terms of processing, O- and N-glycosylated. As to expression, highly expressed in the embryonic nervous system including forebrain, hindbrain and sensory organs (including eye), and in neural crest cells. Also expressed in the dorsal lateral plate, the first site of definitive hematopoiesis in the embryo. Appears in migrating presumptive primordial germ cells (pPGCs) from stage 24. Expressed in the epidermis at stage 40. In the adult, highly expressed in the spleen with lower levels of expression in the liver and very low levels in kidney, heart, skin and brain.

Its subcellular location is the cell membrane. It localises to the cytoplasm. It is found in the nucleus. The protein resides in the early endosome. The protein localises to the late endosome. Its subcellular location is the lysosome. Receptor for the C-X-C chemokine cxcl12/sdf-1. Transduces a signal by increasing the intracellular level of calcium ions. Signaling with cxcl12/sdf-1 mediates the directional movement of mesodermal cells during gastrulation. May play a role in the migration of embryonic presumptive primordial germ cells (pPGCs). May also be involved in regulating the migration of hematopoietic stem cells into the larval liver. This Xenopus laevis (African clawed frog) protein is C-X-C chemokine receptor type 4-A (cxcr4-a).